Consider the following 734-residue polypeptide: Photosystem I P700 chlorophyll a apoprotein A2 (734 aa).

Helical transmembrane passes span 46–69 (IFASHFGQLAIIFLWTSGNLFHVA), 135–158 (LYTGALFLLFLSALSLIGGWLHLQ), 175–199 (LNHHLSGLFGVSSLAWTGHLVHVAI), 273–291 (MAHHHLAIAILFLIAGHMY), 330–353 (IHFQLGLALASLGVITSLVAQHMY), 369–395 (AALYTHHQYIAGFIMTGAFAHGAIFFI), 417–439 (AIISQLSWASLFLGFHTLGLYVH), and 517–535 (FLVHHAIALGLHTTTLILV). 2 residues coordinate [4Fe-4S] cluster: C559 and C568. Helical transmembrane passes span 575–596 (AFYLAVFWMLNTIGWVTFYWHW) and 643–665 (LSVWAWMFLFGHLVWATGFMFLI). Chlorophyll a contacts are provided by H654, M662, and Y670. W671 lines the phylloquinone pocket. The helical transmembrane segment at 707–727 (LVGLAHFSVGYIFTYAAFLIA) threads the bilayer.

This sequence belongs to the PsaA/PsaB family. The PsaA/B heterodimer binds the P700 chlorophyll special pair and subsequent electron acceptors. PSI consists of a core antenna complex that captures photons, and an electron transfer chain that converts photonic excitation into a charge separation. The eukaryotic PSI reaction center is composed of at least 11 subunits. Requires P700 is a chlorophyll a/chlorophyll a' dimer, A0 is one or more chlorophyll a, A1 is one or both phylloquinones and FX is a shared 4Fe-4S iron-sulfur center. as cofactor.

Its subcellular location is the plastid. It is found in the chloroplast thylakoid membrane. The enzyme catalyses reduced [plastocyanin] + hnu + oxidized [2Fe-2S]-[ferredoxin] = oxidized [plastocyanin] + reduced [2Fe-2S]-[ferredoxin]. Its function is as follows. PsaA and PsaB bind P700, the primary electron donor of photosystem I (PSI), as well as the electron acceptors A0, A1 and FX. PSI is a plastocyanin-ferredoxin oxidoreductase, converting photonic excitation into a charge separation, which transfers an electron from the donor P700 chlorophyll pair to the spectroscopically characterized acceptors A0, A1, FX, FA and FB in turn. Oxidized P700 is reduced on the lumenal side of the thylakoid membrane by plastocyanin. The polypeptide is Photosystem I P700 chlorophyll a apoprotein A2 (Draba nemorosa (Woodland whitlowgrass)).